The following is a 614-amino-acid chain: Vitamin B12 transporter BtuB (614 aa).

The N-terminal stretch at 1–20 (MIKKYWFLMVYSVTAFSVWA) is a signal peptide. Positions 26-33 (DTLVVTAN) match the TonB box motif. The TBDR plug domain maps to 38-152 (PLSTVLAPVT…IGGVINIITS (115 aa)). Cyanocob(III)alamin contacts are provided by residues L83, T85, N92, and 110–111 (VS). One can recognise a TBDR beta-barrel domain in the interval 155-614 (NTGTEISAGW…EYILSGSYTF (460 aa)). 3 beta stranded membrane-spanning segments follow: residues 158 to 165 (TEISAGWG), 169 to 178 (YQHYDISTHQ), and 184 to 195 (TRVTLLGDYTYT). Ca(2+)-binding residues include D199, Q211, D213, and D215. Transmembrane regions (beta stranded) follow at residues 217–227 (FLSKTFYGKLE) and 232–248 (DTWS…NRTK). The Ca(2+) site is built by Y249 and D250. Residue A251 participates in cyanocob(III)alamin binding. Residue D261 coordinates Ca(2+). Transmembrane regions (beta stranded) follow at residues 263–277 (RKLY…LRYA), 279–296 (ETLQ…KDYN), 309–325 (NLDD…NSVT), 328–337 (HGNVGAGIDW), 353–369 (YDQR…QKLG), 371–381 (FTLEGAVRNDD), 385–400 (FERH…WEFI), 403–417 (YRFI…KAPN), 434–443 (KSKQWEGAFE), 449–458 (VNWRISGYRN), 473–490 (YYND…TVNF), 494–509 (ALTH…ARNA), 517–529 (RRPK…QLDW), and 535–550 (DWGI…YDSD). R517 provides a ligand contact to cyanocob(III)alamin. Y551 lines the cyanocob(III)alamin pocket. 3 beta stranded membrane-spanning segments follow: residues 558-572 (SVKM…VAVA), 585-596 (IANLFNKDYETG), and 602-614 (AGRE…SYTF). Residues 597-614 (YGYQAAGREYILSGSYTF) carry the TonB C-terminal box motif.

The protein belongs to the TonB-dependent receptor family. BtuB (TC 1.B.14.3.1) subfamily.

Its subcellular location is the cell outer membrane. In terms of biological role, involved in the active translocation of vitamin B12 (cyanocobalamin) across the outer membrane to the periplasmic space. It derives its energy for transport by interacting with the trans-periplasmic membrane protein TonB. The polypeptide is Vitamin B12 transporter BtuB (btuB) (Escherichia coli).